The primary structure comprises 290 residues: RxLR effector protein Avr4 (290 aa).

The N-terminal stretch at 1-24 (MRSLHILLVITASLLASLAVSAEA) is a signal peptide. Residues 33-56 (VVENNKDKSRFLRDGGTTEAQTDE) are disordered. Residues 36–45 (NNKDKSRFLR) show a composition bias toward basic and acidic residues. The RxLR-dEER signature appears at 42–58 (RFLRDGGTTEAQTDEER). Positions 118 to 141 (KYERMQWQKLNEGQTLTYMRVGDR) are W1 motif. Residues 151–174 (QLLRWVAQKKTVKSVYDDLQIEGF) form a W2 motif region. Residues 224-247 (VFEKWAMEGTHIKSVIKTLNLNNK) form a W3 motif region. N-linked (GlcNAc...) asparagine glycosylation occurs at Asn-246. The y motif stretch occupies residues 249 to 270 (ASEMANNENFPALLKYVKLYLD).

Belongs to the RxLR effector family.

It localises to the secreted. The protein resides in the host cytoplasm. Its subcellular location is the host nucleus. The protein localises to the host nucleolus. It is found in the host cytoskeleton. In terms of biological role, secreted effector that acts as an elicitor of hypersensitive response (HR) specifically on plants carrying defense protein R4, through its interaction with this protein. The polypeptide is RxLR effector protein Avr4 (Phytophthora mirabilis).